The chain runs to 321 residues: MGEPQGSMRILVTGGSGLVGKAIQKVVADGAGLPGEDWVFVSSKDADLTDTAQTRALFEKVQPTHVIHLAAMVGGLFRNIKYNLDFWRKNVHMNDNVLHSAFEVGARKVVSCLSTCIFPDKTTYPIDETMIHNGPPHNSNFGYSYAKRMIDVQNRAYFQQYGCTFTAVIPTNVFGPHDNFNIEDGHVLPGLIHKVHLAKSSGSALTVWGTGNPRRQFIYSLDLAQLFIWVLREYNEVEPIILSVGEEDEVSIKEAAEAVVEAMDFHGEVTFDTTKSDGQFKKTASNSKLRTYLPDFRFTPFKQAVKETCAWFTDNYEQARK.

14-20 (GGSGLVG) provides a ligand contact to NADP(+). The Proton donor/acceptor role is filled by Tyr143. Residues Lys147, 170 to 173 (PTNV), and His186 contribute to the NADP(+) site. Substrate is bound by residues Lys194, Trp208, Arg215, and Asp277.

It belongs to the NAD(P)-dependent epimerase/dehydratase family. Fucose synthase subfamily. As to quaternary structure, homodimer.

It catalyses the reaction GDP-beta-L-fucose + NADP(+) = GDP-4-dehydro-alpha-D-rhamnose + NADPH + H(+). Its pathway is nucleotide-sugar biosynthesis; GDP-L-fucose biosynthesis via de novo pathway; GDP-L-fucose from GDP-alpha-D-mannose: step 2/2. In terms of biological role, catalyzes the two-step NADP-dependent conversion of GDP-4-dehydro-6-deoxy-D-mannose to GDP-fucose, involving an epimerase and a reductase reaction. This is GDP-L-fucose synthase from Homo sapiens (Human).